Here is a 710-residue protein sequence, read N- to C-terminus: Amyloid beta precursor protein binding family B member 1 (710 aa).

A Phosphoserine modification is found at S135. Disordered regions lie at residues 143 to 256 and 276 to 300; these read EQGP…SDLP and GTTQWEPPGRASPSQGSSPQEESQL. Positions 145–173 are enriched in acidic residues; it reads GPDEGEEKAAGEAEEDDEDEEEEEEEEDL. N6-acetyllysine is present on K204. Residues 223–234 show a composition bias toward polar residues; the sequence is SWATLSQGSPSY. Positions 253-285 constitute a WW domain; it reads SDLPAGWMRVQDTSGTYYWHIPTGTTQWEPPGR. Residues 287–299 show a composition bias toward low complexity; that stretch reads SPSQGSSPQEESQ. The 140-residue stretch at 370 to 509 folds into the PID 1 domain; it reads FAVRSLGWVE…SKIMSERRNA (140 aa). S459 is modified (phosphoserine; by PKC). Phosphoserine is present on S517. Residues 542–699 form the PID 2 domain; the sequence is KFQVYYLGNV…RRGVQSLWGS (158 aa). Position 547 is a phosphotyrosine; by ABL1 (Y547). S610 carries the post-translational modification Phosphoserine; by SGK1. K701 carries the post-translational modification N6-acetyllysine.

Component of a complex, at least composed of APBB1, RASD1/DEXRAS1 and APP. Interacts (via PID domain 2) with APP (with the intracellular domain of the amyloid-beta precursor protein). Interacts (via PID domain 2) with RASD1/DEXRAS1; impairs the transcription activation activity. Interacts (via PID domain 1) with KAT5/TIP60. Interacts (via the WW domain) with the proline-rich region of APBB1IP. Interacts with TSHZ1 and TSHZ2. Interacts (via the WW domain) with histone H2AX (when phosphorylated on 'Tyr-142') and the proline-rich region of ENAH. Interacts with MAPK8. Interacts (via PID domain 1) with TSHZ3 (via homeobox domain). Interacts with SET. Found in a trimeric complex with HDAC1 and TSHZ3; the interaction between HDAC1 and APBB1 is mediated by TSHZ3. Interacts (via WWW domain) with NEK6. Interacts (via WWW domain) with ABL1. Interacts with RNF157. Interacts with ARF6. In terms of processing, polyubiquitination by RNF157 leads to degradation by the proteasome. Phosphorylation at Ser-610 by SGK1 promotes its localization to the nucleus. Phosphorylated following nuclear translocation. Phosphorylation at Tyr-546 by ABL1 enhances transcriptional activation activity and reduces the affinity for RASD1/DEXRAS1. Post-translationally, acetylation at Lys-204 and Lys-701 by KAT5 promotes its transcription activator activity. Phosphorylated at Ser-459 by PKC upon insulin activation. Expressed in the brain, retinal lens and muscle cells (at protein level).

It is found in the cell membrane. The protein resides in the cytoplasm. It localises to the nucleus. Its subcellular location is the cell projection. The protein localises to the growth cone. It is found in the nucleus speckle. Functionally, transcription coregulator that can have both coactivator and corepressor functions. Adapter protein that forms a transcriptionally active complex with the gamma-secretase-derived amyloid precursor protein (APP) intracellular domain. Plays a central role in the response to DNA damage by translocating to the nucleus and inducing apoptosis. May act by specifically recognizing and binding histone H2AX phosphorylated on 'Tyr-142' (H2AXY142ph) at double-strand breaks (DSBs), recruiting other pro-apoptosis factors such as MAPK8/JNK1. Required for histone H4 acetylation at double-strand breaks (DSBs). Its ability to specifically bind modified histones and chromatin modifying enzymes such as KAT5/TIP60, probably explains its transcription activation activity. Functions in association with TSHZ3, SET and HDAC factors as a transcriptional repressor, that inhibits the expression of CASP4. Associates with chromatin in a region surrounding the CASP4 transcriptional start site(s). Involved in hippocampal neurite branching and neuromuscular junction formation, as a result plays a role in spatial memory functioning. Plays a role in the maintenance of lens transparency. May play a role in muscle cell strength. Acts as a molecular adapter that functions in neurite outgrowth by activating the RAC1-ARF6 axis upon insulin treatment. This chain is Amyloid beta precursor protein binding family B member 1, found in Mus musculus (Mouse).